A 331-amino-acid polypeptide reads, in one-letter code: UBX domain-containing protein 2B (331 aa).

Disordered regions lie at residues 1–26 and 40–65; these read MAEG…SARD and KCKS…QRFY. Ala2 bears the N-acetylalanine mark. Residue Ser56 is modified to Phosphoserine. A Phosphothreonine modification is found at Thr59. Ser66 is subject to Phosphoserine. Residues 141-206 enclose the SEP domain; it reads DVQILLKLWS…MEDHQDQEYI (66 aa). Phosphoserine is present on residues Ser231, Ser234, and Ser235. The 78-residue stretch at 252-329 folds into the UBX domain; sequence DSVPTTKIQI…DILNTVLLQQ (78 aa).

The protein belongs to the NSFL1C family. In terms of assembly, interacts with VCP. Does not bind ubiquitin.

Its subcellular location is the nucleus. It is found in the cytoplasm. It localises to the cytosol. The protein localises to the endoplasmic reticulum. The protein resides in the golgi apparatus. Its subcellular location is the cytoskeleton. It is found in the microtubule organizing center. It localises to the centrosome. Its function is as follows. Adapter protein required for Golgi and endoplasmic reticulum biogenesis. Involved in Golgi and endoplasmic reticulum maintenance during interphase and in their reassembly at the end of mitosis. The complex formed with VCP has membrane fusion activity; membrane fusion activity requires USO1-GOLGA2 tethering and BET1L. VCPIP1 is also required, but not its deubiquitinating activity. Together with NSFL1C/p47, regulates the centrosomal levels of kinase AURKA/Aurora A during mitotic progression by promoting AURKA removal from centrosomes in prophase. Also, regulates spindle orientation during mitosis. The polypeptide is UBX domain-containing protein 2B (UBXN2B) (Homo sapiens (Human)).